The primary structure comprises 290 residues: Protein MGF 110-9L (290 aa).

A run of 3 helical transmembrane segments spans residues 1–19 (MKVI…VIQS), 128–148 (TENI…IGYI), and 163–183 (LLIF…IIMN). 2 N-linked (GlcNAc...) asparagine; by host glycosylation sites follow: Asn-242 and Asn-267.

It belongs to the asfivirus MGF 110 family.

Its subcellular location is the host membrane. Functionally, plays a role in virus cell tropism, and may be required for efficient virus replication in macrophages. The protein is Protein MGF 110-9L of Ornithodoros (relapsing fever ticks).